The sequence spans 737 residues: DNA polymerase iota (737 aa).

In terms of domain architecture, UmuC spans 17-231; that stretch reads IIHLDMDYFY…GDLKRVTGIG (215 aa). Asp-21 provides a ligand contact to Mg(2+). 2 residues coordinate a 2'-deoxyribonucleoside 5'-triphosphate: Tyr-26 and Arg-58. Asp-113 is a binding site for Mg(2+). Glu-114 is an active-site residue. DNA-binding regions lie at residues 212-277 and 288-413; these read TYAE…FGRD and KTIG…SKFQ. Disordered regions lie at residues 443-464, 482-515, 557-581, and 607-643; these read TSLT…RSSP, SPVP…SPKK, DSEK…RFRT, and LSSN…PSPT. Over residues 491–502 the composition is skewed to polar residues; that stretch reads GSESAATNSDFS. Composition is skewed to low complexity over residues 563–577, 607–618, and 632–643; these read PMST…APAP, LSSNASSTASSP, and PSTTTLPFPSPT. Residues 669-686 carry the Ubiquitin-binding (UBM) motif; the sequence is VDAEVFKELPVELQTELI.

This sequence belongs to the DNA polymerase type-Y family. Mg(2+) is required as a cofactor. Mn(2+) serves as cofactor.

Its subcellular location is the nucleus. The enzyme catalyses DNA(n) + a 2'-deoxyribonucleoside 5'-triphosphate = DNA(n+1) + diphosphate. Functionally, error-prone DNA polymerase specifically involved in DNA repair. Plays an important role in translesion synthesis, where the normal high-fidelity DNA polymerases cannot proceed and DNA synthesis stalls. Favors Hoogsteen base-pairing in the active site. Inserts the correct base with higher fidelity opposite an adenosine template. Exhibits low fidelity and efficiency opposite a thymidine template, where it will preferentially insert guanosine. Forms a Schiff base with 5'-deoxyribose phosphate at abasic sites, but may not have lyase activity. The sequence is that of DNA polymerase iota from Drosophila melanogaster (Fruit fly).